Here is a 143-residue protein sequence, read N- to C-terminus: Transcriptional regulator MraZ (143 aa).

SpoVT-AbrB domains are found at residues 5-47 (EYHH…PMQG) and 76-119 (ATEC…SRSR).

Belongs to the MraZ family. Forms oligomers.

The protein localises to the cytoplasm. It is found in the nucleoid. This is Transcriptional regulator MraZ from Moorella thermoacetica (strain ATCC 39073 / JCM 9320).